Reading from the N-terminus, the 749-residue chain is Ensconsin (749 aa).

2 disordered regions span residues 1–91 (MAEL…WLER) and 104–180 (EERK…PDRR). Position 2 is an N-acetylalanine (A2). A compositionally biased stretch (polar residues) spans 36 to 52 (SSRPASAISGQNNNHSG). Composition is skewed to basic and acidic residues over residues 62-91 (RVDD…WLER) and 104-151 (EERK…ERSQ). Residues 89 to 152 (LEREERARQH…VRRTMERSQK (64 aa)) adopt a coiled-coil conformation. 7 positions are modified to phosphoserine: S161, S165, S183, S200, S202, S209, and S219. Residue T231 is modified to Phosphothreonine. A phosphoserine mark is found at S235 and S254. K273 participates in a covalent cross-link: Glycyl lysine isopeptide (Lys-Gly) (interchain with G-Cter in SUMO2). T277 carries the phosphothreonine modification. S282 carries the post-translational modification Phosphoserine. Residue K295 forms a Glycyl lysine isopeptide (Lys-Gly) (interchain with G-Cter in SUMO2) linkage. Polar residues predominate over residues 307–320 (TSGTRRAVSPSNPK). Disordered stretches follow at residues 307 to 688 (TSGT…VSVQ) and 702 to 723 (SKPS…NPIL). Residues S335 and S365 each carry the phosphoserine modification. Composition is skewed to basic and acidic residues over residues 372 to 390 (VKRE…KEPQ) and 406 to 418 (KVEE…RTPA). Residues K373, K377, and K406 each participate in a glycyl lysine isopeptide (Lys-Gly) (interchain with G-Cter in SUMO2) cross-link. A compositionally biased stretch (low complexity) spans 424 to 433 (PAAPAMAPAP). Residues 434–450 (ASAPAPASAPAPAPVPT) are compositionally biased toward pro residues. Positions 451–460 (PAMVSAPSST) are enriched in low complexity. The span at 461-473 (VNASASVKTSAGT) shows a compositional bias: polar residues. A coiled-coil region spans residues 477–612 (EEATRLLAEK…LEEIMKRTRR (136 aa)). Residues 478–627 (EATRLLAEKR…KKTSDQRNGD (150 aa)) are compositionally biased toward basic and acidic residues. A compositionally biased stretch (polar residues) spans 660–672 (VVTSHQSKVTVES). A Phosphothreonine modification is found at T673.

This sequence belongs to the MAP7 family. As to quaternary structure, interacts with TRPV4. The association with microtubules is regulated by phosphorylation during the cell cycle. During interphase only phosphorylated on serine. Phosphorylated on threonine in mitosis. Expressed in the skin and cells of epithelial origin. Predominantly expressed in the suprabasal layers of the normal epidermis and relatively abundant in squamous cell carcinomas but barely detectable in basal cell carcinomas.

Its subcellular location is the cytoplasm. The protein localises to the perinuclear region. It is found in the basolateral cell membrane. It localises to the cytoskeleton. Functionally, microtubule-stabilizing protein that may play an important role during reorganization of microtubules during polarization and differentiation of epithelial cells. Associates with microtubules in a dynamic manner. May play a role in the formation of intercellular contacts. Colocalization with TRPV4 results in the redistribution of TRPV4 toward the membrane and may link cytoskeletal microfilaments. In Homo sapiens (Human), this protein is Ensconsin (MAP7).